Consider the following 301-residue polypeptide: Tetrahydromethanopterin S-methyltransferase subunit E (301 aa).

A run of 5 helical transmembrane segments spans residues 85–105 (VIFA…TYCI), 130–150 (HTPV…VVSY), 151–171 (IMVA…IWGI), 232–252 (PVTG…TAVF), and 258–278 (LTMG…LIIW).

Belongs to the MtrE family. In terms of assembly, the complex is composed of 8 subunits; MtrA, MtrB, MtrC, MtrD, MtrE, MtrF, MtrG and MtrH.

It localises to the cell membrane. It catalyses the reaction 5-methyl-5,6,7,8-tetrahydromethanopterin + coenzyme M + 2 Na(+)(in) = 5,6,7,8-tetrahydromethanopterin + methyl-coenzyme M + 2 Na(+)(out). Part of a complex that catalyzes the formation of methyl-coenzyme M and tetrahydromethanopterin from coenzyme M and methyl-tetrahydromethanopterin. This is an energy-conserving, sodium-ion translocating step. In Methanococcoides burtonii (strain DSM 6242 / NBRC 107633 / OCM 468 / ACE-M), this protein is Tetrahydromethanopterin S-methyltransferase subunit E.